Consider the following 156-residue polypeptide: Small ribosomal subunit protein uS7 (156 aa).

This sequence belongs to the universal ribosomal protein uS7 family. Part of the 30S ribosomal subunit. Contacts proteins S9 and S11.

In terms of biological role, one of the primary rRNA binding proteins, it binds directly to 16S rRNA where it nucleates assembly of the head domain of the 30S subunit. Is located at the subunit interface close to the decoding center, probably blocks exit of the E-site tRNA. The polypeptide is Small ribosomal subunit protein uS7 (Wigglesworthia glossinidia brevipalpis).